Consider the following 734-residue polypeptide: Phosphoribosylformylglycinamidine synthase subunit PurL (734 aa).

Residue His46 is part of the active site. The ATP site is built by Tyr49 and Lys88. Glu90 is a Mg(2+) binding site. Substrate-binding positions include 91-94 and Arg113; that span reads SHNH. Catalysis depends on His92, which acts as the Proton acceptor. Asp114 provides a ligand contact to Mg(2+). Gln237 serves as a coordination point for substrate. Asp265 contributes to the Mg(2+) binding site. Position 309–311 (309–311) interacts with substrate; the sequence is ESQ. Asp489 and Gly526 together coordinate ATP. Asn527 is a Mg(2+) binding site. Ser529 provides a ligand contact to substrate.

This sequence belongs to the FGAMS family. Monomer. Part of the FGAM synthase complex composed of 1 PurL, 1 PurQ and 2 PurS subunits.

The protein resides in the cytoplasm. It carries out the reaction N(2)-formyl-N(1)-(5-phospho-beta-D-ribosyl)glycinamide + L-glutamine + ATP + H2O = 2-formamido-N(1)-(5-O-phospho-beta-D-ribosyl)acetamidine + L-glutamate + ADP + phosphate + H(+). The protein operates within purine metabolism; IMP biosynthesis via de novo pathway; 5-amino-1-(5-phospho-D-ribosyl)imidazole from N(2)-formyl-N(1)-(5-phospho-D-ribosyl)glycinamide: step 1/2. Its function is as follows. Part of the phosphoribosylformylglycinamidine synthase complex involved in the purines biosynthetic pathway. Catalyzes the ATP-dependent conversion of formylglycinamide ribonucleotide (FGAR) and glutamine to yield formylglycinamidine ribonucleotide (FGAM) and glutamate. The FGAM synthase complex is composed of three subunits. PurQ produces an ammonia molecule by converting glutamine to glutamate. PurL transfers the ammonia molecule to FGAR to form FGAM in an ATP-dependent manner. PurS interacts with PurQ and PurL and is thought to assist in the transfer of the ammonia molecule from PurQ to PurL. In Gluconobacter oxydans (strain 621H) (Gluconobacter suboxydans), this protein is Phosphoribosylformylglycinamidine synthase subunit PurL.